We begin with the raw amino-acid sequence, 396 residues long: tRNA (guanine(9)-N1)-methyltransferase (396 aa).

Basic and acidic residues-rich tracts occupy residues 1–18 (MEDDDRPRKYPKLNHDEV) and 52–73 (DRIDNDVKQACDEEGQDAHGKD). The disordered stretch occupies residues 1–109 (MEDDDRPRKY…KVKRKEKLVA (109 aa)). The SAM-dependent MTase TRM10-type domain maps to 139 to 357 (TQKKFQRSTL…QVIPQRKGGK (219 aa)). Residues 264–265 (LS), Gly-284, 288–292 (DKNRH), Cys-296, Leu-310, and 322–324 (QVL) contribute to the S-adenosyl-L-methionine site. The active-site Proton acceptor is the Asp-288. The interval 354–396 (KGGKLKSADHESEDQTPRESVEAVEAEPDGEGAAAEAGEGGKE) is disordered. Over residues 359–374 (KSADHESEDQTPRESV) the composition is skewed to basic and acidic residues.

It belongs to the class IV-like SAM-binding methyltransferase superfamily. TRM10 family. In terms of assembly, monomer.

It localises to the cytoplasm. The protein localises to the nucleus. It catalyses the reaction guanosine(9) in tRNA + S-adenosyl-L-methionine = N(1)-methylguanosine(9) in tRNA + S-adenosyl-L-homocysteine + H(+). In terms of biological role, S-adenosyl-L-methionine-dependent guanine N(1)-methyltransferase that catalyzes the formation of N(1)-methylguanine at position 9 (m1G9) in cytoplasmic tRNA. In Aspergillus fumigatus (strain ATCC MYA-4609 / CBS 101355 / FGSC A1100 / Af293) (Neosartorya fumigata), this protein is tRNA (guanine(9)-N1)-methyltransferase.